We begin with the raw amino-acid sequence, 794 residues long: FT-interacting protein 1 (794 aa).

The segment covering 1-27 (MAAKDGAKSQEDYKLKDMKPELGERWP) has biased composition (basic and acidic residues). Residues 1–34 (MAAKDGAKSQEDYKLKDMKPELGERWPHGGQRGG) are disordered. C2 domains are found at residues 37 to 158 (WIGS…PQWY), 198 to 321 (VQGE…SKWY), and 364 to 492 (YISD…THSY). 4 residues coordinate Ca(2+): aspartate 76, aspartate 123, glutamate 125, and glutamate 131. 4 consecutive transmembrane segments (helical) span residues 510–532 (LAVRFTCLSLAHMIYLYGHPLLP), 595–615 (IVSVFAGLIAMSKWLGDVCYW), 619–639 (LTTILFHVLFFILICYPELIL), and 737–757 (LFVIFCLVAAMILYVTPFKII).

It belongs to the MCTP family. Interacts with FT in phloem companion cells. Ca(2+) serves as cofactor. Expressed in the vascular tissues of roots, cotyledons and rosette leaves. Specifically located in the phloem including companion cells. Observed in flowers. Not detected in the shoot apical meristem.

It is found in the endoplasmic reticulum membrane. It localises to the cell junction. Its subcellular location is the plasmodesma. Functionally, involved in the export of FT from the phloem companion cells to the sieve elements through the plasmodesmata. Regulates flowering time under long days. May function as a signaling molecule by regulating the trafficking of other regulators. This Arabidopsis thaliana (Mouse-ear cress) protein is FT-interacting protein 1.